The sequence spans 282 residues: Undecaprenyl-diphosphatase (282 aa).

7 helical membrane-spanning segments follow: residues 40–60, 85–105, 117–137, 158–178, 193–213, 231–251, and 258–278; these read GAAF…IYFF, AKMG…GLLF, YWIS…EWLI, ALII…RSGV, AARF…IYQL, IVAT…LITF, and AVFI…IATG.

Belongs to the UppP family.

It localises to the cell inner membrane. It catalyses the reaction di-trans,octa-cis-undecaprenyl diphosphate + H2O = di-trans,octa-cis-undecaprenyl phosphate + phosphate + H(+). Its function is as follows. Catalyzes the dephosphorylation of undecaprenyl diphosphate (UPP). Confers resistance to bacitracin. This chain is Undecaprenyl-diphosphatase, found in Prosthecochloris aestuarii (strain DSM 271 / SK 413).